Reading from the N-terminus, the 236-residue chain is 5'-methylthioadenosine/S-adenosylhomocysteine nucleosidase (236 aa).

Residue Glu12 is the Proton acceptor of the active site. Substrate contacts are provided by residues Gly78, Met153, and 174 to 175; that span reads ME. Asp198 serves as the catalytic Proton donor.

The protein belongs to the PNP/UDP phosphorylase family. MtnN subfamily.

The catalysed reaction is S-adenosyl-L-homocysteine + H2O = S-(5-deoxy-D-ribos-5-yl)-L-homocysteine + adenine. The enzyme catalyses S-methyl-5'-thioadenosine + H2O = 5-(methylsulfanyl)-D-ribose + adenine. It catalyses the reaction 5'-deoxyadenosine + H2O = 5-deoxy-D-ribose + adenine. It functions in the pathway amino-acid biosynthesis; L-methionine biosynthesis via salvage pathway; S-methyl-5-thio-alpha-D-ribose 1-phosphate from S-methyl-5'-thioadenosine (hydrolase route): step 1/2. In terms of biological role, catalyzes the irreversible cleavage of the glycosidic bond in both 5'-methylthioadenosine (MTA) and S-adenosylhomocysteine (SAH/AdoHcy) to adenine and the corresponding thioribose, 5'-methylthioribose and S-ribosylhomocysteine, respectively. Also cleaves 5'-deoxyadenosine, a toxic by-product of radical S-adenosylmethionine (SAM) enzymes, into 5-deoxyribose and adenine. The sequence is that of 5'-methylthioadenosine/S-adenosylhomocysteine nucleosidase from Geobacillus thermodenitrificans (strain NG80-2).